The primary structure comprises 705 residues: Elongation factor G (705 aa).

The tr-type G domain maps to 8-290; it reads AYYRNIGISA…AVIEYLPAPT (283 aa). Residues 17 to 24, 88 to 92, and 142 to 145 each bind GTP; these read AHIDAGKT, DTPGH, and NKMD.

The protein belongs to the TRAFAC class translation factor GTPase superfamily. Classic translation factor GTPase family. EF-G/EF-2 subfamily.

The protein resides in the cytoplasm. Catalyzes the GTP-dependent ribosomal translocation step during translation elongation. During this step, the ribosome changes from the pre-translocational (PRE) to the post-translocational (POST) state as the newly formed A-site-bound peptidyl-tRNA and P-site-bound deacylated tRNA move to the P and E sites, respectively. Catalyzes the coordinated movement of the two tRNA molecules, the mRNA and conformational changes in the ribosome. In Baumannia cicadellinicola subsp. Homalodisca coagulata, this protein is Elongation factor G.